We begin with the raw amino-acid sequence, 281 residues long: Biotin synthase (281 aa).

Residues 1–230 (MNQKIFLCSI…AQRIMVAGGR (230 aa)) form the Radical SAM core domain. [4Fe-4S] cluster contacts are provided by Cys-18, Cys-22, and Cys-25. [2Fe-2S] cluster-binding residues include Cys-62, Cys-97, and Arg-223.

This sequence belongs to the radical SAM superfamily. Biotin synthase family. In terms of assembly, homodimer. It depends on [4Fe-4S] cluster as a cofactor. [2Fe-2S] cluster serves as cofactor.

The catalysed reaction is (4R,5S)-dethiobiotin + (sulfur carrier)-SH + 2 reduced [2Fe-2S]-[ferredoxin] + 2 S-adenosyl-L-methionine = (sulfur carrier)-H + biotin + 2 5'-deoxyadenosine + 2 L-methionine + 2 oxidized [2Fe-2S]-[ferredoxin]. Its pathway is cofactor biosynthesis; biotin biosynthesis; biotin from 7,8-diaminononanoate: step 2/2. Functionally, catalyzes the conversion of dethiobiotin (DTB) to biotin by the insertion of a sulfur atom into dethiobiotin via a radical-based mechanism. This is Biotin synthase from Sulfurimonas denitrificans (strain ATCC 33889 / DSM 1251) (Thiomicrospira denitrificans (strain ATCC 33889 / DSM 1251)).